An 88-amino-acid chain; its full sequence is Beta-insect excitatory toxin LqhIT1d (88 aa).

An N-terminal signal peptide occupies residues 1–18 (MKFFLLFLVVLPIMGVLG). The region spanning 20 to 83 (KNGFAVDSNG…ISDTRKKLCD (64 aa)) is the LCN-type CS-alpha/beta domain. 4 disulfides stabilise this stretch: Cys34-Cys55, Cys40-Cys60, Cys44-Cys62, and Cys56-Cys82.

It belongs to the long (4 C-C) scorpion toxin superfamily. Sodium channel inhibitor family. Beta subfamily. Expressed by the venom gland.

Its subcellular location is the secreted. Excitatory insect toxins induce a spastic paralysis. They bind voltage-independently at site-4 of sodium channels (Nav) and shift the voltage of activation toward more negative potentials thereby affecting sodium channel activation and promoting spontaneous and repetitive firing. The protein is Beta-insect excitatory toxin LqhIT1d of Leiurus hebraeus (Hebrew deathstalker scorpion).